Here is a 579-residue protein sequence, read N- to C-terminus: uncharacterized protein (579 aa).

This is an uncharacterized protein from Klebsiella pneumoniae.